Reading from the N-terminus, the 185-residue chain is piRNA-mediated silencing protein C19orf84 homolog (185 aa).

Disordered regions lie at residues 1 to 38 (MDELEDGALSNGDNLSLPSAGTESWPTSATPGLPPSLL) and 93 to 185 (HIWP…EADY). Residues 11–25 (NGDNLSLPSAGTESW) are compositionally biased toward polar residues. Residues 26-38 (PTSATPGLPPSLL) show a composition bias toward low complexity. Residues 118–130 (RPSRGWGRGRGRG) show a composition bias toward basic residues. Basic and acidic residues predominate over residues 139-150 (GPERAEERERNM).

In terms of assembly, interacts with SPOCD1.

The protein localises to the nucleus. It is found in the nucleoplasm. Functionally, protein adapter involved in piRNA-directed transposon methylation by connecting PIWIL4-piRNA and DNA methylation machineries. The PIWIL4-piRNA pathway plays a central role during spermatogenesis by directing transposon DNA methylation and silencing, thereby preventing their mobilization, which is essential for the germline integrity. This Mus musculus (Mouse) protein is piRNA-mediated silencing protein C19orf84 homolog.